The sequence spans 228 residues: Expansin-B13 (228 aa).

A signal peptide spans 1–22 (MASSSLLLASVVVAAMVSAVSC). A glycan (N-linked (GlcNAc...) asparagine) is linked at N32. Residues 61–172 (SGACGYKDVD…KEKGSEEWKA (112 aa)) form the Expansin-like EG45 domain. 2 cysteine pairs are disulfide-bonded: C64–C92 and C100–C106. The region spanning 142–223 (GKDEELLKYV…GWKADSVYKS (82 aa)) is the Expansin-like CBD domain.

It belongs to the expansin family. Expansin B subfamily.

The protein localises to the secreted. The protein resides in the cell wall. It localises to the membrane. In terms of biological role, may cause loosening and extension of plant cell walls by disrupting non-covalent bonding between cellulose microfibrils and matrix glucans. No enzymatic activity has been found. May be required for rapid internodal elongation in deepwater rice during submergence. The sequence is that of Expansin-B13 (EXPB13) from Oryza sativa subsp. japonica (Rice).